The sequence spans 592 residues: UvrABC system protein C (592 aa).

One can recognise a GIY-YIG domain in the interval 14–91 (KKPGCYLWKN…IKKHKPRYNI (78 aa)). Residues 197-232 (DQVLKDLKEKESIASEKFDFEQAKKYLDLQKAINLI) enclose the UVR domain.

It belongs to the UvrC family. As to quaternary structure, interacts with UvrB in an incision complex.

The protein resides in the cytoplasm. In terms of biological role, the UvrABC repair system catalyzes the recognition and processing of DNA lesions. UvrC both incises the 5' and 3' sides of the lesion. The N-terminal half is responsible for the 3' incision and the C-terminal half is responsible for the 5' incision. The polypeptide is UvrABC system protein C (Mycoplasmoides gallisepticum (strain R(low / passage 15 / clone 2)) (Mycoplasma gallisepticum)).